The sequence spans 347 residues: Ribosomal RNA small subunit methyltransferase C (347 aa).

The protein belongs to the methyltransferase superfamily. RsmC family. In terms of assembly, monomer.

The protein resides in the cytoplasm. It catalyses the reaction guanosine(1207) in 16S rRNA + S-adenosyl-L-methionine = N(2)-methylguanosine(1207) in 16S rRNA + S-adenosyl-L-homocysteine + H(+). Its function is as follows. Specifically methylates the guanine in position 1207 of 16S rRNA in the 30S particle. The polypeptide is Ribosomal RNA small subunit methyltransferase C (Shewanella baltica (strain OS195)).